Reading from the N-terminus, the 739-residue chain is Polyribonucleotide nucleotidyltransferase (739 aa).

Residues Asp-487 and Asp-493 each coordinate Mg(2+). Positions 554-613 (PRIETMQIPTDKIRDVIGTGGKVIREIVEKTGAKINIEDTGVVKIASADGKAIKAAYNWI) constitute a KH domain. The S1 motif domain occupies 623–691 (GVIYDGTIVK…DRGKIRLSMK (69 aa)). Residues 694-739 (DQQTGEDITDKIKAQRDAERAERGDEPREPREGGRHRGERRREAGE) are disordered. Residues 701–739 (ITDKIKAQRDAERAERGDEPREPREGGRHRGERRREAGE) are compositionally biased toward basic and acidic residues.

It belongs to the polyribonucleotide nucleotidyltransferase family. Requires Mg(2+) as cofactor.

Its subcellular location is the cytoplasm. The catalysed reaction is RNA(n+1) + phosphate = RNA(n) + a ribonucleoside 5'-diphosphate. Involved in mRNA degradation. Catalyzes the phosphorolysis of single-stranded polyribonucleotides processively in the 3'- to 5'-direction. The protein is Polyribonucleotide nucleotidyltransferase of Methylobacterium radiotolerans (strain ATCC 27329 / DSM 1819 / JCM 2831 / NBRC 15690 / NCIMB 10815 / 0-1).